The following is a 238-amino-acid chain: 1-(5-phosphoribosyl)-5-[(5-phosphoribosylamino)methylideneamino] imidazole-4-carboxamide isomerase (238 aa).

The active-site Proton acceptor is aspartate 8. Catalysis depends on aspartate 130, which acts as the Proton donor.

It belongs to the HisA/HisF family.

It localises to the cytoplasm. The catalysed reaction is 1-(5-phospho-beta-D-ribosyl)-5-[(5-phospho-beta-D-ribosylamino)methylideneamino]imidazole-4-carboxamide = 5-[(5-phospho-1-deoxy-D-ribulos-1-ylimino)methylamino]-1-(5-phospho-beta-D-ribosyl)imidazole-4-carboxamide. It participates in amino-acid biosynthesis; L-histidine biosynthesis; L-histidine from 5-phospho-alpha-D-ribose 1-diphosphate: step 4/9. This is 1-(5-phosphoribosyl)-5-[(5-phosphoribosylamino)methylideneamino] imidazole-4-carboxamide isomerase from Methanococcus maripaludis (strain C5 / ATCC BAA-1333).